Reading from the N-terminus, the 348-residue chain is UDP-3-O-acylglucosamine N-acyltransferase (348 aa).

Residue His241 is the Proton acceptor of the active site.

It belongs to the transferase hexapeptide repeat family. LpxD subfamily. In terms of assembly, homotrimer.

The enzyme catalyses a UDP-3-O-[(3R)-3-hydroxyacyl]-alpha-D-glucosamine + a (3R)-hydroxyacyl-[ACP] = a UDP-2-N,3-O-bis[(3R)-3-hydroxyacyl]-alpha-D-glucosamine + holo-[ACP] + H(+). The protein operates within bacterial outer membrane biogenesis; LPS lipid A biosynthesis. Functionally, catalyzes the N-acylation of UDP-3-O-acylglucosamine using 3-hydroxyacyl-ACP as the acyl donor. Is involved in the biosynthesis of lipid A, a phosphorylated glycolipid that anchors the lipopolysaccharide to the outer membrane of the cell. The polypeptide is UDP-3-O-acylglucosamine N-acyltransferase (Neisseria meningitidis serogroup B (strain ATCC BAA-335 / MC58)).